The following is a 278-amino-acid chain: Small ribosomal subunit protein uS3 (278 aa).

The region spanning 39–107 is the KH type-2 domain; that stretch reads LRKAISKKYV…KVQLNIVEIS (69 aa). Positions 255 to 278 are disordered; sequence AEIPAEEKPKRVVKKAENITKEEE.

It belongs to the universal ribosomal protein uS3 family. In terms of assembly, part of the 30S ribosomal subunit. Forms a tight complex with proteins S10 and S14.

In terms of biological role, binds the lower part of the 30S subunit head. Binds mRNA in the 70S ribosome, positioning it for translation. The polypeptide is Small ribosomal subunit protein uS3 (Dehalococcoides mccartyi (strain ATCC BAA-2100 / JCM 16839 / KCTC 5957 / BAV1)).